A 70-amino-acid polypeptide reads, in one-letter code: Small ribosomal subunit protein bS21 (70 aa).

Belongs to the bacterial ribosomal protein bS21 family.

The chain is Small ribosomal subunit protein bS21 from Paracidovorax citrulli (strain AAC00-1) (Acidovorax citrulli).